Here is a 602-residue protein sequence, read N- to C-terminus: Glutaminase liver isoform, mitochondrial (602 aa).

The transit peptide at 1 to 14 directs the protein to the mitochondrion; the sequence is MRSMRALQNALSRA. Disordered regions lie at residues 1 to 29 and 45 to 66; these read MRSM…PSRG and AQGR…ASHS. Serine 219 is a binding site for substrate. Residue lysine 253 is modified to N6-succinyllysine. Asparagine 268 is a binding site for substrate. N6-acetyllysine is present on residues lysine 279 and lysine 284. Residues glutamate 314 and asparagine 321 each contribute to the substrate site. Lysine 329 bears the N6-acetyllysine mark. 3 residues coordinate substrate: tyrosine 347, tyrosine 399, and valine 417. 2 ANK repeats span residues 518–551 and 552–585; these read DSRT…VKDR and WGNI…SETQ.

This sequence belongs to the glutaminase family. In terms of assembly, homotetramer, dimer of dimers. Does not assemble into higher oligomers. Interacts with the PDZ domain of the syntrophin SNTA1. Interacts with the PDZ domain of TAX1BP3.

The protein resides in the mitochondrion. The catalysed reaction is L-glutamine + H2O = L-glutamate + NH4(+). With respect to regulation, enzyme activity is not stimulated by phosphate. Phosphate increases kcat, but decreases substrate affinity, resulting in unchanged enzyme activity. Functionally, plays an important role in the regulation of glutamine catabolism. Promotes mitochondrial respiration and increases ATP generation in cells by catalyzing the synthesis of glutamate and alpha-ketoglutarate. Increases cellular anti-oxidant function via NADH and glutathione production. May play a role in preventing tumor proliferation. This chain is Glutaminase liver isoform, mitochondrial (Gls2), found in Mus musculus (Mouse).